A 378-amino-acid polypeptide reads, in one-letter code: Chorismate synthase (378 aa).

Residues 42-61 form a disordered region; the sequence is IQAELDRRRPGQSPITTPRQ. Arginine 49 contributes to the NADP(+) binding site. Residues 126-128, glycine 287, 302-306, and arginine 328 contribute to the FMN site; these read RAS and KPTAT.

This sequence belongs to the chorismate synthase family. In terms of assembly, homotetramer. It depends on FMNH2 as a cofactor.

It catalyses the reaction 5-O-(1-carboxyvinyl)-3-phosphoshikimate = chorismate + phosphate. It functions in the pathway metabolic intermediate biosynthesis; chorismate biosynthesis; chorismate from D-erythrose 4-phosphate and phosphoenolpyruvate: step 7/7. Catalyzes the anti-1,4-elimination of the C-3 phosphate and the C-6 proR hydrogen from 5-enolpyruvylshikimate-3-phosphate (EPSP) to yield chorismate, which is the branch point compound that serves as the starting substrate for the three terminal pathways of aromatic amino acid biosynthesis. This reaction introduces a second double bond into the aromatic ring system. This Synechococcus sp. (strain JA-2-3B'a(2-13)) (Cyanobacteria bacterium Yellowstone B-Prime) protein is Chorismate synthase.